A 550-amino-acid chain; its full sequence is Gamma-aminobutyric acid receptor subunit beta (550 aa).

A signal peptide spans 1-24 (MRRSKTRRIFHVSITLLLVSTIFC). Topologically, residues 25–264 (QNGTKPHNNS…FQLRRSVGYF (240 aa)) are extracellular. 6 N-linked (GlcNAc...) asparagine glycosylation sites follow: asparagine 26, asparagine 32, asparagine 33, asparagine 45, asparagine 53, and asparagine 193. Cysteine 180 and cysteine 194 are disulfide-bonded. Transmembrane regions (helical) follow at residues 265–285 (IFQT…SFWI), 292–311 (ARVA…STGV), and 324–344 (IDIY…EYAA). At 345–527 (VNYSYWGRER…DVNLIDKYSR (183 aa)) the chain is on the cytoplasmic side. Residues 405–465 (AMSTSNTAAQ…TTSLKGARPH (61 aa)) are disordered. Polar residues predominate over residues 406 to 421 (MSTSNTAAQNNNFEST). A helical transmembrane segment spans residues 528-548 (VVFPVCFIVFNLFYWSYYMMV).

Belongs to the ligand-gated ion channel (TC 1.A.9) family. Gamma-aminobutyric acid receptor (TC 1.A.9.5) subfamily.

Its subcellular location is the postsynaptic cell membrane. It is found in the cell membrane. Functionally, GABA, an inhibitory neurotransmitter, mediates neuronal inhibition by binding to the GABA receptor and opening an integral chloride channel. The protein is Gamma-aminobutyric acid receptor subunit beta (gab-1) of Caenorhabditis elegans.